Reading from the N-terminus, the 323-residue chain is ADP/ATP translocase 4 (323 aa).

Topologically, residues methionine 1–serine 23 are mitochondrial intermembrane. The Solcar 1 repeat unit spans residues threonine 22–leucine 114. Residues phenylalanine 24–glutamine 53 traverse the membrane as a helical segment. The Mitochondrial matrix segment spans residues valine 54 to asparagine 90. Residues leucine 91–phenylalanine 115 form a helical membrane-spanning segment. 2 residues coordinate ADP: arginine 96 and lysine 108. Over methionine 116 to phenylalanine 125 the chain is Mitochondrial intermembrane. A helical transmembrane segment spans residues tryptophan 126–valine 146. Solcar repeat units follow at residues arginine 127–leucine 217 and threonine 224–leucine 311. Residues valine 147 to glycine 194 are Mitochondrial matrix-facing. The helical transmembrane segment at valine 195–lysine 215 threads the bilayer. Residues glycine 216–phenylalanine 226 lie on the Mitochondrial intermembrane side of the membrane. The helical transmembrane segment at leucine 227–phenylalanine 247 threads the bilayer. Residues aspartate 248–glycine 287 are Mitochondrial matrix-facing. Arginine 251 provides a ligand contact to ADP. Positions arginine 251–methionine 256 are important for transport activity. A Nucleotide carrier signature motif motif is present at residues arginine 251–methionine 256. Residues alanine 288–tyrosine 305 traverse the membrane as a helical segment. Residues aspartate 306–aspartate 323 lie on the Mitochondrial intermembrane side of the membrane.

This sequence belongs to the mitochondrial carrier (TC 2.A.29) family. Monomer.

The protein localises to the mitochondrion inner membrane. It is found in the membrane. The protein resides in the cell projection. Its subcellular location is the cilium. It localises to the flagellum membrane. The catalysed reaction is ADP(in) + ATP(out) = ADP(out) + ATP(in). It catalyses the reaction dATP(out) + ADP(in) = dATP(in) + ADP(out). It carries out the reaction dADP(in) + ADP(out) = dADP(out) + ADP(in). The enzyme catalyses H(+)(in) = H(+)(out). Its activity is regulated as follows. The matrix-open state (m-state) is inhibited by the membrane-permeable bongkrekic acid (BKA). The cytoplasmic-open state (c-state) is inhibited by the membrane-impermeable toxic inhibitor carboxyatractyloside (CATR). Proton transporter activity is inhibited by ADP:ATP antiporter activity. In terms of biological role, ADP:ATP antiporter that mediates import of ADP into the mitochondrial matrix for ATP synthesis, and export of ATP out to fuel the cell. Cycles between the cytoplasmic-open state (c-state) and the matrix-open state (m-state): operates by the alternating access mechanism with a single substrate-binding site intermittently exposed to either the cytosolic (c-state) or matrix (m-state) side of the inner mitochondrial membrane. Specifically required during spermatogenesis, probably to mediate ADP:ATP exchange in spermatocytes. Large ATP supplies from mitochondria may be critical for normal progression of spermatogenesis during early stages of meiotic prophase I, including DNA double-strand break repair and chromosomal synapsis. In addition to its ADP:ATP antiporter activity, also involved in mitochondrial uncoupling and mitochondrial permeability transition pore (mPTP) activity. Plays a role in mitochondrial uncoupling by acting as a proton transporter: proton transport uncouples the proton flows via the electron transport chain and ATP synthase to reduce the efficiency of ATP production and cause mitochondrial thermogenesis. Proton transporter activity is inhibited by ADP:ATP antiporter activity, suggesting that SLC25A31/ANT4 acts as a master regulator of mitochondrial energy output by maintaining a delicate balance between ATP production (ADP:ATP antiporter activity) and thermogenesis (proton transporter activity). Proton transporter activity requires free fatty acids as cofactor, but does not transport it. Among nucleotides, may also exchange ADP for dATP and dADP. Also plays a key role in mPTP opening, a non-specific pore that enables free passage of the mitochondrial membranes to solutes of up to 1.5 kDa, and which contributes to cell death. It is however unclear if SLC25A31/ANT4 constitutes a pore-forming component of mPTP or regulates it. This chain is ADP/ATP translocase 4, found in Bos taurus (Bovine).